Reading from the N-terminus, the 166-residue chain is Small ribosomal subunit protein bS6 (166 aa).

2 stretches are compositionally biased toward basic and acidic residues: residues 96-142 (HEEG…DRPP) and 149-166 (GGDR…GGAE). The segment at 96–166 (HEEGPSAMMQ…PREGFEGGAE (71 aa)) is disordered.

It belongs to the bacterial ribosomal protein bS6 family.

Binds together with bS18 to 16S ribosomal RNA. This chain is Small ribosomal subunit protein bS6, found in Mesorhizobium japonicum (strain LMG 29417 / CECT 9101 / MAFF 303099) (Mesorhizobium loti (strain MAFF 303099)).